The sequence spans 193 residues: Probable nicotinate-nucleotide adenylyltransferase (193 aa).

Belongs to the NadD family.

The enzyme catalyses nicotinate beta-D-ribonucleotide + ATP + H(+) = deamido-NAD(+) + diphosphate. Its pathway is cofactor biosynthesis; NAD(+) biosynthesis; deamido-NAD(+) from nicotinate D-ribonucleotide: step 1/1. In terms of biological role, catalyzes the reversible adenylation of nicotinate mononucleotide (NaMN) to nicotinic acid adenine dinucleotide (NaAD). This chain is Probable nicotinate-nucleotide adenylyltransferase, found in Endomicrobium trichonymphae.